Consider the following 310-residue polypeptide: Junctional adhesion molecule C (310 aa).

A signal peptide spans 1-29 (MALSRRLRLRLYARLPDFFLLLLFRGCMI). Residues 30–241 (EAVNLKSSNR…GQDMEVYDLN (212 aa)) are Extracellular-facing. Positions 35-127 (KSSNRNPVVH…VALNDRKEVD (93 aa)) constitute an Ig-like V-type domain. Intrachain disulfides connect Cys53–Cys115 and Cys160–Cys219. N-linked (GlcNAc...) asparagine glycans are attached at residues Asn104 and Asn192. The region spanning 139 to 236 (PVTPVCRIPA…AARCEGQDME (98 aa)) is the Ig-like C2-type domain. A helical membrane pass occupies residues 242–262 (IAGIIGGVLVVLIVLAVITMG). The Cytoplasmic portion of the chain corresponds to 263 to 310 (ICCAYRRGCFISSKQDGESYKSPGKHDGVNYIRTSEEGDFRHKSSFVI). Residues Cys264 and Cys265 are each lipidated (S-palmitoyl cysteine).

The protein belongs to the immunoglobulin superfamily. In terms of assembly, interacts with ITGAM. Interacts with GORASP2. Proteolytically cleaved from endothelial cells surface into a soluble form by ADAM10 and ADAM17; the release of soluble JAM3 is increased by pro-inflammatory factors. Post-translationally, N-glycosylated. In terms of processing, S-palmitoylated by ZDHHC7. S-palmitoylation promotes expression at tight junctions. In terms of tissue distribution, colocalizes with Jam2 near the lumen of seminiferous tubulues. Detected at junctional plaques that correspond to cell-cell contacts between spermatids and Sertoli cells. Detected on endothelial cells, in brain vessels and kidney glomeruli (at protein level). Detected in heart, lung, liver, kidney, testis, thymus, lymph node and Peyer patch. Endothelial cells.

The protein resides in the cell membrane. It is found in the cell junction. It localises to the desmosome. Its subcellular location is the tight junction. The protein localises to the secreted. Junctional adhesion protein that mediates heterotypic cell-cell interactions with its cognate receptor JAM2 to regulate different cellular processes. Plays a role in homing and mobilization of hematopoietic stem and progenitor cells within the bone marrow. At the surface of bone marrow stromal cells, it contributes to the retention of the hematopoietic stem and progenitor cells expressing JAM3. Plays a central role in leukocytes extravasation by facilitating transmigration through the endothelium. Plays a role in spermatogenesis where JAM2 and JAM3, which are respectively expressed by Sertoli and germ cells, mediate an interaction between both cell types and play an essential role in the anchorage of germ cells onto Sertoli cells and the assembly of cell polarity complexes during spermatid differentiation. Also functions as a counter-receptor for ITGAM, mediating leukocyte-platelet interactions and is involved in the regulation of transepithelial migration of polymorphonuclear neutrophils (PMN). Plays a role in angiogenesis. Plays a role in the regulation of cell migration. During myogenesis, it is involved in myocyte fusion. Functionally, promotes chemotaxis of vascular endothelial cells and stimulates angiogenesis. This Mus musculus (Mouse) protein is Junctional adhesion molecule C (Jam3).